A 74-amino-acid chain; its full sequence is UPF0270 protein NT01EI_3666 (74 aa).

This sequence belongs to the UPF0270 family.

This is UPF0270 protein NT01EI_3666 from Edwardsiella ictaluri (strain 93-146).